The sequence spans 111 residues: Shuttling pre-60S factor C23B6.02c (111 aa).

Composition is skewed to basic residues over residues 1 to 12 (MAKKQSIRSRNF) and 59 to 73 (SKKKKNKKQTSKKAK). Disordered stretches follow at residues 1–25 (MAKKQSIRSRNFRRSDPAYDLDSST) and 47–111 (ALRS…QGDE). Positions 83–111 (QAREERLDTKISKSLQKQEKLKARKQGDE) are enriched in basic and acidic residues.

It belongs to the ECM1 family. Associates with the pre-60S ribosomal particle and the nucleopore complex.

The protein localises to the nucleus. Its subcellular location is the nucleolus. It is found in the cytoplasm. In terms of biological role, pre-ribosomal factor involved in 60S ribosomal protein subunit export from the nucleus. In Schizosaccharomyces pombe (strain 972 / ATCC 24843) (Fission yeast), this protein is Shuttling pre-60S factor C23B6.02c.